Reading from the N-terminus, the 196-residue chain is Probable malonic semialdehyde reductase RutE (196 aa).

Belongs to the nitroreductase family. HadB/RutE subfamily. FMN serves as cofactor.

The catalysed reaction is 3-hydroxypropanoate + NADP(+) = 3-oxopropanoate + NADPH + H(+). Its function is as follows. May reduce toxic product malonic semialdehyde to 3-hydroxypropionic acid, which is excreted. This is Probable malonic semialdehyde reductase RutE from Enterobacter sp. (strain 638).